The following is an 895-amino-acid chain: Transcription factor SWI6 (895 aa).

Polar residues predominate over residues 1–45; it reads MASTVAGNSFVSQQHPGNLHSANLQSQSQGFRRQNSTSSVPSTAS. Residues 1–107 form a disordered region; sequence MASTVAGNSF…SDQNVPQQPQ (107 aa). Residues 64 to 100 are compositionally biased toward low complexity; that stretch reads MSSQQSQPPASQQSFSMSQTGSQPQPSQSSFRSYSDQ. Residues 112 to 219 enclose the HTH APSES-type domain; that stretch reads IYTAVYSNVE…NRNPDGSVSQ (108 aa). Positions 143 to 164 form a DNA-binding region, H-T-H motif; that stretch reads ATQILKVAGVEKGKRTKILEKE. Disordered stretches follow at residues 272-293 and 323-358; these read ARFD…SFQR and NMAF…NSFG. ANK repeat units follow at residues 458 to 488 and 607 to 636; these read QCHT…PFRV and AGDT…SPHI. The segment at 653-684 is disordered; the sequence is SDGAMKTKGDSGGDVENGDVGGSSQKSNESSN. A compositionally biased stretch (polar residues) spans 674-684; that stretch reads GSSQKSNESSN. The stretch at 698–759 forms a coiled coil; the sequence is SANFQEEIKN…VTNLQRAEER (62 aa).

Its subcellular location is the nucleus. Functionally, transcription factor that plays a role downstream of the MCK1-MKK2-MPS1 cascade. Required for hyphal morphogenesis and pathogenicity. Is an important oxidative stress response regulator and plays a positive role in the regulation of extracellular peroxidases. The polypeptide is Transcription factor SWI6 (Pyricularia oryzae (strain 70-15 / ATCC MYA-4617 / FGSC 8958) (Rice blast fungus)).